Consider the following 473-residue polypeptide: Suppressor of SWI4 1 homolog (473 aa).

In terms of domain architecture, Brix spans 29–292; that stretch reads PHSFVFTRGC…LIKVQEGVGE (264 aa). Phosphoserine is present on residues S238 and S240. The interval 323–473 is disordered; the sequence is AQRQAQQAQN…GRGRPRKRVA (151 aa). Positions 324 to 334 are enriched in low complexity; the sequence is QRQAQQAQNVQ. Residues 335-360 show a composition bias toward basic and acidic residues; that stretch reads RKQEQREAHRKKSLEGMKKARVRGGD. The span at 376–388 shows a compositional bias: acidic residues; that stretch reads GEDDDEQEDDDIE. Basic residues predominate over residues 407 to 421; sequence KRKRLAKSPGQKRKR. Residues 422–444 are compositionally biased toward basic and acidic residues; that stretch reads REMDRGRGRLCDQKFPKPKDKSH. An N6-acetyllysine modification is found at K438. The segment covering 464-473 has biased composition (basic residues); it reads GRGRPRKRVA.

The protein localises to the nucleus. It is found in the nucleolus. In terms of biological role, may have a role in cell growth. The sequence is that of Suppressor of SWI4 1 homolog (PPAN) from Pongo abelii (Sumatran orangutan).